An 875-amino-acid chain; its full sequence is Protein translocase subunit SecA (875 aa).

ATP contacts are provided by residues Gln87, 105–109 (GEGKT), and Asp512. Residues Cys860, Cys862, Cys871, and His872 each coordinate Zn(2+).

This sequence belongs to the SecA family. In terms of assembly, monomer and homodimer. Part of the essential Sec protein translocation apparatus which comprises SecA, SecYEG and auxiliary proteins SecDF-YajC and YidC. Requires Zn(2+) as cofactor.

The protein resides in the cell inner membrane. Its subcellular location is the cytoplasm. The enzyme catalyses ATP + H2O + cellular proteinSide 1 = ADP + phosphate + cellular proteinSide 2.. In terms of biological role, part of the Sec protein translocase complex. Interacts with the SecYEG preprotein conducting channel. Has a central role in coupling the hydrolysis of ATP to the transfer of proteins into and across the cell membrane, serving both as a receptor for the preprotein-SecB complex and as an ATP-driven molecular motor driving the stepwise translocation of polypeptide chains across the membrane. This Buchnera aphidicola subsp. Acyrthosiphon pisum (strain APS) (Acyrthosiphon pisum symbiotic bacterium) protein is Protein translocase subunit SecA.